Reading from the N-terminus, the 129-residue chain is Large ribosomal subunit protein uL22 (129 aa).

It belongs to the universal ribosomal protein uL22 family. As to quaternary structure, part of the 50S ribosomal subunit.

This protein binds specifically to 23S rRNA; its binding is stimulated by other ribosomal proteins, e.g. L4, L17, and L20. It is important during the early stages of 50S assembly. It makes multiple contacts with different domains of the 23S rRNA in the assembled 50S subunit and ribosome. In terms of biological role, the globular domain of the protein is located near the polypeptide exit tunnel on the outside of the subunit, while an extended beta-hairpin is found that lines the wall of the exit tunnel in the center of the 70S ribosome. The sequence is that of Large ribosomal subunit protein uL22 from Rhizobium meliloti (strain 1021) (Ensifer meliloti).